The sequence spans 177 residues: Small ribosomal subunit protein uS4 (177 aa).

An S4 RNA-binding domain is found at Arg-104 to Glu-168. The segment at Pro-157–Glu-177 is disordered. Positions Ser-165–Glu-177 are enriched in basic and acidic residues.

The protein belongs to the universal ribosomal protein uS4 family. Part of the 30S ribosomal subunit. Contacts protein S5. The interaction surface between S4 and S5 is involved in control of translational fidelity.

One of the primary rRNA binding proteins, it binds directly to 16S rRNA where it nucleates assembly of the body of the 30S subunit. Its function is as follows. With S5 and S12 plays an important role in translational accuracy. This chain is Small ribosomal subunit protein uS4, found in Methanococcus aeolicus (strain ATCC BAA-1280 / DSM 17508 / OCM 812 / Nankai-3).